We begin with the raw amino-acid sequence, 109 residues long: Small ribosomal subunit protein bS16 (109 aa).

The segment at 87–109 is disordered; sequence ALRETPKKSAPKAKAQERAKAAG. Over residues 100 to 109 the composition is skewed to basic and acidic residues; it reads KAQERAKAAG.

It belongs to the bacterial ribosomal protein bS16 family.

The sequence is that of Small ribosomal subunit protein bS16 from Rhodospirillum centenum (strain ATCC 51521 / SW).